Here is a 432-residue protein sequence, read N- to C-terminus: Adenylosuccinate synthetase (432 aa).

GTP-binding positions include 13-19 and 41-43; these read GDEGKGK and GHT. Aspartate 14 functions as the Proton acceptor in the catalytic mechanism. The Mg(2+) site is built by aspartate 14 and glycine 41. Residues 14-17, 39-42, threonine 130, arginine 144, glutamine 225, threonine 240, and arginine 304 each bind IMP; these read DEGK and NAGH. Histidine 42 serves as the catalytic Proton donor. 300-306 contacts substrate; that stretch reads ATTGRRR. GTP-binding positions include arginine 306, 332–334, and 415–417; these read KLD and STG.

It belongs to the adenylosuccinate synthetase family. In terms of assembly, homodimer. The cofactor is Mg(2+).

Its subcellular location is the cytoplasm. It catalyses the reaction IMP + L-aspartate + GTP = N(6)-(1,2-dicarboxyethyl)-AMP + GDP + phosphate + 2 H(+). Its pathway is purine metabolism; AMP biosynthesis via de novo pathway; AMP from IMP: step 1/2. Its function is as follows. Plays an important role in the de novo pathway of purine nucleotide biosynthesis. Catalyzes the first committed step in the biosynthesis of AMP from IMP. The polypeptide is Adenylosuccinate synthetase (Enterobacter sp. (strain 638)).